The chain runs to 203 residues: Cutinase pbc1 (203 aa).

The first 18 residues, 1 to 18 (MKVTALGNTLTGFGQALA), serve as a signal peptide directing secretion. Cysteine 32 and cysteine 107 are disulfide-bonded. Catalysis depends on serine 118, which acts as the Nucleophile. A disulfide bridge links cysteine 166 with cysteine 173. The active site involves histidine 170. The active-site Proton donor/acceptor is histidine 183.

This sequence belongs to the cutinase family. Post-translationally, the 2 disulfide bonds play a critical role in holding the catalytic residues in juxta-position; reduction of the disulfide bridges results in the complete inactivation of the enzyme.

It localises to the secreted. It catalyses the reaction cutin + H2O = cutin monomers.. Its function is as follows. Catalyzes the hydrolysis of complex carboxylic polyesters found in the cell wall of plants. Degrades cutin, a macromolecule that forms the structure of the plant cuticle. Allows pathogenic fungi to penetrate through the cuticular barrier into the host plant during the initial stage of fungal infection. This chain is Cutinase pbc1, found in Pyrenopeziza brassicae.